Consider the following 379-residue polypeptide: Muconate cycloisomerase 1-1 (379 aa).

Residue Lys169 is part of the active site. The Mn(2+) site is built by Asp198, Glu224, and Asp247.

This sequence belongs to the mandelate racemase/muconate lactonizing enzyme family. As to quaternary structure, homooctamer. Mn(2+) serves as cofactor.

It catalyses the reaction (S)-muconolactone = cis,cis-muconate + H(+). Its pathway is aromatic compound metabolism; beta-ketoadipate pathway; 5-oxo-4,5-dihydro-2-furylacetate from catechol: step 2/3. In terms of biological role, catalyzes a syn cycloisomerization. The protein is Muconate cycloisomerase 1-1 (catB1) of Acinetobacter lwoffii.